The following is a 667-amino-acid chain: Primary amine oxidase (667 aa).

The N-terminal stretch at 1 to 18 (KFALFSVLTLLSFHAVFS) is a signal peptide. N-linked (GlcNAc...) asparagine glycosylation is present at Asn-149. Cys-155 and Cys-176 are joined by a disulfide. The disordered stretch occupies residues 216 to 246 (PTAENTEYQVSKQSPPFGPKQHSLTSHQPQG). Over residues 218–229 (AENTEYQVSKQS) the composition is skewed to polar residues. N-linked (GlcNAc...) asparagine glycosylation is present at Asn-252. Substrate is bound at residue 316 to 327 (FFDSGEFGFGLS). The active-site Proton acceptor is Asp-318. An intrachain disulfide couples Cys-337 to Cys-363. Residue Asn-382 is glycosylated (N-linked (GlcNAc...) asparagine). 402–407 (VGNYDN) serves as a coordination point for substrate. Tyr-405 acts as the Schiff-base intermediate with substrate; via topaquinone in catalysis. At Tyr-405 the chain carries 2',4',5'-topaquinone. The Cu cation site is built by His-460 and His-462. Residues Asp-469, Phe-470, and Asp-471 each contribute to the Mn(2+) site. A glycan (N-linked (GlcNAc...) asparagine) is linked at Asn-576. Residues Asp-610 and Ile-611 each contribute to the Mn(2+) site. Position 621 (His-621) interacts with Cu cation.

Belongs to the copper/topaquinone oxidase family. Homodimer. Cu cation serves as cofactor. Zn(2+) is required as a cofactor. It depends on L-topaquinone as a cofactor. Requires Mn(2+) as cofactor. Post-translationally, glycosylated; contains two carbohydrate chains per monomer. In terms of processing, topaquinone (TPQ) is generated by copper-dependent autoxidation of a specific tyrosyl residue.

The catalysed reaction is a primary methyl amine + O2 + H2O = an aldehyde + H2O2 + NH4(+). In Lens culinaris (Lentil), this protein is Primary amine oxidase.